The primary structure comprises 260 residues: Thaumatin-like protein 1 (260 aa).

Positions 1–32 (MIITVLHSHVSFYFIILSFLFFHALHLVGSDG) are cleaved as a signal peptide. Disulfide bonds link Cys41–Cys255, Cys89–Cys100, Cys105–Cys112, Cys166–Cys245, Cys171–Cys228, Cys179–Cys191, Cys195–Cys204, and Cys205–Cys215.

It belongs to the thaumatin family. As to expression, expressed only in roots.

In terms of biological role, involved in local responses of roots to colonization by non-pathogenic plant growth-promoting rhizobacteria (PGPR) fluorescent Pseudomonas spp., but seems to not being required for the establishment of subsequent induced systemic resistance (ISR). The protein is Thaumatin-like protein 1 of Arabidopsis thaliana (Mouse-ear cress).